A 430-amino-acid polypeptide reads, in one-letter code: Trigger factor (430 aa).

In terms of domain architecture, PPIase FKBP-type spans 163-248; it reads GDTVVFDFAG…IHEIKAQELP (86 aa).

Belongs to the FKBP-type PPIase family. Tig subfamily.

It is found in the cytoplasm. The enzyme catalyses [protein]-peptidylproline (omega=180) = [protein]-peptidylproline (omega=0). Its function is as follows. Involved in protein export. Acts as a chaperone by maintaining the newly synthesized protein in an open conformation. Functions as a peptidyl-prolyl cis-trans isomerase. This is Trigger factor from Exiguobacterium sibiricum (strain DSM 17290 / CCUG 55495 / CIP 109462 / JCM 13490 / 255-15).